Consider the following 193-residue polypeptide: dTTP/UTP pyrophosphatase (193 aa).

D71 (proton acceptor) is an active-site residue.

It belongs to the Maf family. YhdE subfamily. Requires a divalent metal cation as cofactor.

It localises to the cytoplasm. It carries out the reaction dTTP + H2O = dTMP + diphosphate + H(+). The enzyme catalyses UTP + H2O = UMP + diphosphate + H(+). Nucleoside triphosphate pyrophosphatase that hydrolyzes dTTP and UTP. May have a dual role in cell division arrest and in preventing the incorporation of modified nucleotides into cellular nucleic acids. This chain is dTTP/UTP pyrophosphatase, found in Citrifermentans bemidjiense (strain ATCC BAA-1014 / DSM 16622 / JCM 12645 / Bem) (Geobacter bemidjiensis).